Reading from the N-terminus, the 387-residue chain is Phosphoglycerate kinase (387 aa).

Substrate-binding positions include Asp-21–Asn-23, Arg-36, and His-59–Arg-62. N6-acetyllysine is present on Lys-84. Substrate-binding residues include Arg-113 and Arg-146. Residues Lys-197, Glu-314, and Gly-340–Thr-343 contribute to the ATP site.

The protein belongs to the phosphoglycerate kinase family. As to quaternary structure, monomer.

The protein localises to the cytoplasm. It carries out the reaction (2R)-3-phosphoglycerate + ATP = (2R)-3-phospho-glyceroyl phosphate + ADP. It functions in the pathway carbohydrate degradation; glycolysis; pyruvate from D-glyceraldehyde 3-phosphate: step 2/5. In Shigella sonnei (strain Ss046), this protein is Phosphoglycerate kinase.